A 308-amino-acid chain; its full sequence is Putative S-adenosyl-L-methionine-dependent methyltransferase MAB_4584c (308 aa).

Residues aspartate 131 and 160-161 (DL) each bind S-adenosyl-L-methionine.

It belongs to the UPF0677 family.

Exhibits S-adenosyl-L-methionine-dependent methyltransferase activity. This chain is Putative S-adenosyl-L-methionine-dependent methyltransferase MAB_4584c, found in Mycobacteroides abscessus (strain ATCC 19977 / DSM 44196 / CCUG 20993 / CIP 104536 / JCM 13569 / NCTC 13031 / TMC 1543 / L948) (Mycobacterium abscessus).